Consider the following 509-residue polypeptide: Dihydrolipoyl dehydrogenase, mitochondrial (509 aa).

A mitochondrion-targeting transit peptide spans 1–35 (MQSWSRVYCSLAKRGHFNRISHGLQGLSAVPLRTY). The residue at position 66 (lysine 66) is an N6-acetyllysine; alternate. Lysine 66 carries the N6-succinyllysine; alternate modification. FAD is bound by residues 71 to 80 (EKNETLGGTC) and lysine 89. Cysteine 80 and cysteine 85 are joined by a disulfide. 4 positions are modified to N6-acetyllysine; alternate: lysine 104, lysine 122, lysine 132, and lysine 143. N6-succinyllysine; alternate occurs at positions 104, 122, 132, and 143. Position 154 (glycine 154) interacts with FAD. Lysine 159 and lysine 166 each carry N6-succinyllysine. Position 183–185 (183–185 (TGS)) interacts with FAD. NAD(+)-binding positions include 220–227 (GAGVIGVE) and glutamate 243. Lysine 273 and lysine 277 each carry N6-succinyllysine. Valine 278 contacts NAD(+). A phosphoserine mark is found at serine 285 and serine 297. Glycine 314 contacts NAD(+). At lysine 346 the chain carries N6-acetyllysine. FAD contacts are provided by residues aspartate 355 and 361–364 (MLAH). Lysine 410 carries the post-translational modification N6-acetyllysine; alternate. Lysine 410 carries the N6-succinyllysine; alternate modification. An N6-acetyllysine mark is found at lysine 417 and lysine 420. Lysine 430 carries the N6-succinyllysine modification. Catalysis depends on histidine 487, which acts as the Proton acceptor. Serine 502 carries the post-translational modification Phosphoserine. Lysine 505 carries the N6-acetyllysine; alternate modification. Lysine 505 carries the N6-succinyllysine; alternate modification.

The protein belongs to the class-I pyridine nucleotide-disulfide oxidoreductase family. Homodimer. Part of the multimeric pyruvate dehydrogenase complex that contains multiple copies of pyruvate dehydrogenase (subunits PDHA (PDHA1 or PDHA2) and PDHB, E1), dihydrolipoamide acetyltransferase (DLAT, E2) and lipoamide dehydrogenase (DLD, E3). These subunits are bound to an inner core composed of about 48 DLAT and 12 PDHX molecules (by non covalent bonds). The 2-oxoglutarate dehydrogenase complex is composed of OGDH (2-oxoglutarate dehydrogenase; E1), DLST (dihydrolipoamide succinyltransferase; E2), DLD (dihydrolipoamide dehydrogenase; E3) and the assembly factor KGD4. It contains multiple copies of the three enzymatic components (E1, E2 and E3). In the nucleus, the 2-oxoglutarate dehydrogenase complex associates with KAT2A. Interacts with PDHX. It depends on FAD as a cofactor. Tyrosine phosphorylated.

It localises to the mitochondrion matrix. It is found in the nucleus. Its subcellular location is the cell projection. The protein localises to the cilium. The protein resides in the flagellum. It localises to the cytoplasmic vesicle. It is found in the secretory vesicle. Its subcellular location is the acrosome. The catalysed reaction is N(6)-[(R)-dihydrolipoyl]-L-lysyl-[protein] + NAD(+) = N(6)-[(R)-lipoyl]-L-lysyl-[protein] + NADH + H(+). In terms of biological role, lipoamide dehydrogenase is a component of the glycine cleavage system as well as an E3 component of three alpha-ketoacid dehydrogenase complexes (pyruvate-, alpha-ketoglutarate-, and branched-chain amino acid-dehydrogenase complex). The 2-oxoglutarate dehydrogenase complex is mainly active in the mitochondrion. A fraction of the 2-oxoglutarate dehydrogenase complex also localizes in the nucleus and is required for lysine succinylation of histones: associates with KAT2A on chromatin and provides succinyl-CoA to histone succinyltransferase KAT2A. In monomeric form may have additional moonlighting function as serine protease. Involved in the hyperactivation of spermatazoa during capacitation and in the spermatazoal acrosome reaction. The sequence is that of Dihydrolipoyl dehydrogenase, mitochondrial (DLD) from Macaca fascicularis (Crab-eating macaque).